A 1028-amino-acid chain; its full sequence is Sodium/potassium-transporting ATPase subunit alpha-4 (1028 aa).

Residues 1–36 form a disordered region; that stretch reads MEPGKETAATSEQKPRPTLRASNTNRQPKVKRRKKD. At 1 to 92 the chain is on the cytoplasmic side; the sequence is MEPGKETAAT…NVLTPPPTTP (92 aa). The interval 87-89 is interaction with phosphoinositide-3 kinase; sequence PPP. The helical transmembrane segment at 93-113 threads the bilayer; it reads EWIKFCKQLFGGFSLLLWTGS. The Extracellular segment spans residues 114–137; it reads LLCFLAYGIHVSYYQENANKDNLY. Residues 138-158 form a helical membrane-spanning segment; the sequence is LGIVLSAVVIITGCFSYYQEA. At 159 to 294 the chain is on the cytoplasmic side; sequence KSSKIMESFK…MGKTPIATEI (136 aa). Residues 295–314 traverse the membrane as a helical segment; that stretch reads EHFIHIITAVAVFLGVTFFF. Topologically, residues 315–326 are extracellular; it reads LSLILGYTWLDA. A helical transmembrane segment spans residues 327–344; it reads VIFLIGIIVANVPEGLLA. The Cytoplasmic segment spans residues 345–777; the sequence is TVTVCLTLTA…EEGRLIFDNL (433 aa). The active-site 4-aspartylphosphate intermediate is D382. Mg(2+) is bound by residues D722 and D726. The chain crosses the membrane as a helical span at residues 778 to 797; sequence KKSIAYTLTSNIPEITPFLL. At 798-807 the chain is on the extracellular side; sequence FIVLSIPLPL. The helical transmembrane segment at 808–828 threads the bilayer; that stretch reads GTITILCIDLGTDMVPAISLA. At 829 to 848 the chain is on the cytoplasmic side; sequence YETPESDIMKRLPRNPKTDN. A helical transmembrane segment spans residues 849-871; sequence LVNDRLIGMAYGQIGMIQALAGF. Over 872 to 923 the chain is Extracellular; sequence FTYFVILAENGFKPLDLLGIRLYWDDTNLNDLEDTYGQQWTYEQRKVVEFTC. The helical transmembrane segment at 924–943 threads the bilayer; sequence QTAFFISIVIVQWADLIICK. Topologically, residues 944 to 956 are cytoplasmic; the sequence is TRRNSLFKQGMKN. At S948 the chain carries Phosphoserine; by PKA. The chain crosses the membrane as a helical span at residues 957–975; that stretch reads KVLIFGLLEETILAACLSY. Residues 976–990 lie on the Extracellular side of the membrane; that stretch reads IPGMDVALRMYPLKI. The helical transmembrane segment at 991–1011 threads the bilayer; that stretch reads NWWFCALPYSVLIFIYDEVRK. The Cytoplasmic portion of the chain corresponds to 1012-1028; that stretch reads LIIRRRPGGWLEKETYY.

This sequence belongs to the cation transport ATPase (P-type) (TC 3.A.3) family. Type IIC subfamily. In terms of assembly, the sodium/potassium-transporting ATPase is composed of a catalytic alpha subunit, an auxiliary non-catalytic beta subunit and an additional regulatory subunit.

Its subcellular location is the cell membrane. The enzyme catalyses K(+)(out) + Na(+)(in) + ATP + H2O = K(+)(in) + Na(+)(out) + ADP + phosphate + H(+). Its activity is regulated as follows. Specifically inhibited by an endogenous cardiac glycoside, ouabain. Functionally, this is the catalytic component of the active enzyme, which catalyzes the hydrolysis of ATP coupled with the exchange of sodium and potassium ions across the plasma membrane. This action creates the electrochemical gradient of sodium and potassium ions, providing the energy for active transport of various nutrients. Plays a role in sperm motility. This chain is Sodium/potassium-transporting ATPase subunit alpha-4 (Atp1a4), found in Rattus norvegicus (Rat).